Consider the following 459-residue polypeptide: Argininosuccinate lyase (459 aa).

This sequence belongs to the lyase 1 family. Argininosuccinate lyase subfamily.

The protein resides in the cytoplasm. The catalysed reaction is 2-(N(omega)-L-arginino)succinate = fumarate + L-arginine. Its pathway is amino-acid biosynthesis; L-arginine biosynthesis; L-arginine from L-ornithine and carbamoyl phosphate: step 3/3. This chain is Argininosuccinate lyase, found in Chromobacterium violaceum (strain ATCC 12472 / DSM 30191 / JCM 1249 / CCUG 213 / NBRC 12614 / NCIMB 9131 / NCTC 9757 / MK).